The sequence spans 731 residues: Endopolyphosphatase (731 aa).

The Cytoplasmic portion of the chain corresponds to 1–4; it reads MSLS. A helical; Signal-anchor for type II membrane protein transmembrane segment spans residues 5–25; the sequence is RCILGLACLWHGVIASPLGAV. Residues 26–731 lie on the Vacuolar side of the membrane; that stretch reads PSNIPIATDL…VEKEDLKKFT (706 aa). A glycan (N-linked (GlcNAc...) asparagine) is linked at N106. The disordered stretch occupies residues 375-403; it reads KLQPPPTDSKNSGQLKKGKKGRKGKKKKP. Over residues 390–402 the composition is skewed to basic residues; sequence KKGKKGRKGKKKK. N433 is a glycosylation site (N-linked (GlcNAc...) asparagine). Positions 456–522 are disordered; the sequence is EQNDRQKHLD…PPGPAYSPQP (67 aa). Basic and acidic residues-rich tracts occupy residues 457-474 and 492-501; these read QNDR…PSHM and GGDSKPKKPD. The segment covering 505 to 519 has biased composition (pro residues); it reads PHPPAKSSPPGPAYS. 2 N-linked (GlcNAc...) asparagine glycosylation sites follow: N534 and N540. The disordered stretch occupies residues 626-706; sequence AKSIDVSYES…HKKKKGKKRQ (81 aa). Over residues 636-686 the composition is skewed to acidic residues; the sequence is AAEEEEEEEEEEEEDLFEEVEETDEEEEQEDDDLSDGEEVDDDSDEDELET. Residues 691–706 are compositionally biased toward basic residues; that stretch reads KHDKKKHKKKKGKKRQ.

Belongs to the endopolyphosphatase PPN1 family. It depends on a divalent metal cation as a cofactor. Post-translationally, processing by proteases in the vacuole may be required for activation.

It is found in the vacuole membrane. It carries out the reaction [phosphate](n+1) + n H2O = (n+1) phosphate + n H(+). Its function is as follows. Catalyzes the hydrolysis of inorganic polyphosphate (polyP) chains of many hundreds of phosphate residues into shorter lengths. In Neurospora crassa (strain ATCC 24698 / 74-OR23-1A / CBS 708.71 / DSM 1257 / FGSC 987), this protein is Endopolyphosphatase (epp-1).